We begin with the raw amino-acid sequence, 336 residues long: Syntaxin-31 (336 aa).

Over 1–314 (MGSTFRDRTV…QHLTRISSNR (314 aa)) the chain is Cytoplasmic. 2 disordered regions span residues 23-53 (GAIP…KASR) and 152-218 (RSEN…SQLR). Basic and acidic residues predominate over residues 154–163 (ENMKAHENRK). The span at 164–181 (QLFSTKNAVDSPPQNNAK) shows a compositional bias: polar residues. Low complexity predominate over residues 190–202 (SSSSNPFGNLQQP). The 63-residue stretch at 244–306 (ENYSQSRAVA…EGARSALLQH (63 aa)) folds into the t-SNARE coiled-coil homology domain. A helical; Anchor for type IV membrane protein transmembrane segment spans residues 315-335 (WLMMKIFAVIILFLIVFLFFV). Alanine 336 is a topological domain (vesicular).

Belongs to the syntaxin family. As to quaternary structure, part of the t-SNARE complex. Interacts with CDC48A, but not with VPS45.

It is found in the golgi apparatus. The protein localises to the cis-Golgi network membrane. The protein resides in the cytoplasm. It localises to the endosome. Functionally, vesicle trafficking protein that functions in the secretory pathway. This is Syntaxin-31 (SYP31) from Arabidopsis thaliana (Mouse-ear cress).